The following is a 204-amino-acid chain: Imidazoleglycerol-phosphate dehydratase (204 aa).

Belongs to the imidazoleglycerol-phosphate dehydratase family.

Its subcellular location is the cytoplasm. The enzyme catalyses D-erythro-1-(imidazol-4-yl)glycerol 3-phosphate = 3-(imidazol-4-yl)-2-oxopropyl phosphate + H2O. Its pathway is amino-acid biosynthesis; L-histidine biosynthesis; L-histidine from 5-phospho-alpha-D-ribose 1-diphosphate: step 6/9. This chain is Imidazoleglycerol-phosphate dehydratase, found in Corynebacterium jeikeium (strain K411).